A 115-amino-acid polypeptide reads, in one-letter code: Large ribosomal subunit protein bL20c (115 aa).

Belongs to the bacterial ribosomal protein bL20 family.

It is found in the plastid. The protein resides in the chloroplast. Functionally, binds directly to 23S ribosomal RNA and is necessary for the in vitro assembly process of the 50S ribosomal subunit. It is not involved in the protein synthesizing functions of that subunit. In Nymphaea alba (White water-lily), this protein is Large ribosomal subunit protein bL20c.